The chain runs to 175 residues: Transcription factor E (175 aa).

One can recognise an HTH TFE/IIEalpha-type domain in the interval 3–88 (ENPLIQQVLF…TWKPSLEKVP (86 aa)).

Belongs to the TFE family. As to quaternary structure, monomer. Interaction with RNA polymerase subunits RpoF and RpoE is necessary for Tfe stimulatory transcription activity. Able to interact with Tbp and RNA polymerase in the absence of DNA promoter. Interacts both with the preinitiation and elongation complexes.

Transcription factor that plays a role in the activation of archaeal genes transcribed by RNA polymerase. Facilitates transcription initiation by enhancing TATA-box recognition by TATA-box-binding protein (Tbp), and transcription factor B (Tfb) and RNA polymerase recruitment. Not absolutely required for transcription in vitro, but particularly important in cases where Tbp or Tfb function is not optimal. It dynamically alters the nucleic acid-binding properties of RNA polymerases by stabilizing the initiation complex and destabilizing elongation complexes. Seems to translocate with the RNA polymerase following initiation and acts by binding to the non template strand of the transcription bubble in elongation complexes. This is Transcription factor E from Methanococcus maripaludis (strain C7 / ATCC BAA-1331).